A 116-amino-acid polypeptide reads, in one-letter code: Large ribosomal subunit protein bL19 (116 aa).

Belongs to the bacterial ribosomal protein bL19 family.

Its function is as follows. This protein is located at the 30S-50S ribosomal subunit interface and may play a role in the structure and function of the aminoacyl-tRNA binding site. In Clostridium novyi (strain NT), this protein is Large ribosomal subunit protein bL19.